Consider the following 92-residue polypeptide: RNA-binding protein Hfq (92 aa).

Residues Asp-9–Val-68 enclose the Sm domain. A disordered region spans residues Gly-73–Gln-92.

This sequence belongs to the Hfq family. Homohexamer.

In terms of biological role, RNA chaperone that binds small regulatory RNA (sRNAs) and mRNAs to facilitate mRNA translational regulation in response to envelope stress, environmental stress and changes in metabolite concentrations. Also binds with high specificity to tRNAs. The polypeptide is RNA-binding protein Hfq (Xanthomonas axonopodis pv. citri (strain 306)).